The chain runs to 332 residues: Ribosomal RNA small subunit methyltransferase H (332 aa).

Residues 39–41 (GGY), Asp-56, Phe-83, Asp-100, and Gln-107 contribute to the S-adenosyl-L-methionine site.

The protein belongs to the methyltransferase superfamily. RsmH family.

It is found in the cytoplasm. It carries out the reaction cytidine(1402) in 16S rRNA + S-adenosyl-L-methionine = N(4)-methylcytidine(1402) in 16S rRNA + S-adenosyl-L-homocysteine + H(+). Its function is as follows. Specifically methylates the N4 position of cytidine in position 1402 (C1402) of 16S rRNA. This Bartonella quintana (strain Toulouse) (Rochalimaea quintana) protein is Ribosomal RNA small subunit methyltransferase H.